The primary structure comprises 210 residues: N-(5'-phosphoribosyl)anthranilate isomerase (210 aa).

It belongs to the TrpF family.

The enzyme catalyses N-(5-phospho-beta-D-ribosyl)anthranilate = 1-(2-carboxyphenylamino)-1-deoxy-D-ribulose 5-phosphate. It participates in amino-acid biosynthesis; L-tryptophan biosynthesis; L-tryptophan from chorismate: step 3/5. The polypeptide is N-(5'-phosphoribosyl)anthranilate isomerase (Trichormus variabilis (strain ATCC 29413 / PCC 7937) (Anabaena variabilis)).